Here is a 293-residue protein sequence, read N- to C-terminus: Acidic endochitinase (293 aa).

The signal sequence occupies residues 1–22; that stretch reads MEKCFNIIPSLLLISLLIKSSN. A GH18 domain is found at 24 to 293; it reads AGIAVYWGQN…GYSNAIKGSV (270 aa). Cystine bridges form between cysteine 43–cysteine 90 and cysteine 73–cysteine 80. Catalysis depends on glutamate 150, which acts as the Proton donor. An intrachain disulfide couples cysteine 179 to cysteine 208.

The protein belongs to the glycosyl hydrolase 18 family. Chitinase class II subfamily.

It is found in the secreted. Its subcellular location is the extracellular space. The enzyme catalyses Random endo-hydrolysis of N-acetyl-beta-D-glucosaminide (1-&gt;4)-beta-linkages in chitin and chitodextrins.. Its function is as follows. This protein functions as a defense against chitin containing fungal pathogens. In Cicer arietinum (Chickpea), this protein is Acidic endochitinase.